Consider the following 503-residue polypeptide: Glycerol kinase (503 aa).

Thr14 is an ADP binding site. The ATP site is built by Thr14, Thr15, and Ser16. Thr14 is a binding site for sn-glycerol 3-phosphate. Arg18 serves as a coordination point for ADP. 4 residues coordinate sn-glycerol 3-phosphate: Arg84, Glu85, Tyr136, and Asp246. 5 residues coordinate glycerol: Arg84, Glu85, Tyr136, Asp246, and Gln247. ADP is bound by residues Thr268 and Gly311. Residues Thr268, Gly311, Gln315, and Gly412 each coordinate ATP. Positions 412 and 416 each coordinate ADP.

The protein belongs to the FGGY kinase family. As to quaternary structure, homotetramer and homodimer (in equilibrium). Heterodimer with EIIA-Glc. Binds 1 zinc ion per glycerol kinase EIIA-Glc dimer. The zinc ion is important for dimerization.

It catalyses the reaction glycerol + ATP = sn-glycerol 3-phosphate + ADP + H(+). It functions in the pathway polyol metabolism; glycerol degradation via glycerol kinase pathway; sn-glycerol 3-phosphate from glycerol: step 1/1. Activity of this regulatory enzyme is affected by several metabolites. Allosterically and non-competitively inhibited by fructose 1,6-bisphosphate (FBP) and unphosphorylated phosphocarrier protein EIIA-Glc (III-Glc), an integral component of the bacterial phosphotransferase (PTS) system. Its function is as follows. Key enzyme in the regulation of glycerol uptake and metabolism. Catalyzes the phosphorylation of glycerol to yield sn-glycerol 3-phosphate. This chain is Glycerol kinase, found in Klebsiella pneumoniae subsp. pneumoniae (strain ATCC 700721 / MGH 78578).